The sequence spans 37 residues: Ferredoxin--NADP reductase, chloroplastic (37 aa).

NADP(+) is bound by residues serine 3 and 24–25 (SR).

Belongs to the ferredoxin--NADP reductase type 1 family. Requires FAD as cofactor.

It is found in the plastid. Its subcellular location is the chloroplast stroma. The protein resides in the chloroplast thylakoid membrane. It carries out the reaction 2 reduced [2Fe-2S]-[ferredoxin] + NADP(+) + H(+) = 2 oxidized [2Fe-2S]-[ferredoxin] + NADPH. It functions in the pathway energy metabolism; photosynthesis. Its function is as follows. May play a key role in regulating the relative amounts of cyclic and non-cyclic electron flow to meet the demands of the plant for ATP and reducing power. This Imperata cylindrica (Cogon grass) protein is Ferredoxin--NADP reductase, chloroplastic.